We begin with the raw amino-acid sequence, 539 residues long: Chaperone Ric-8A (539 aa).

The interval 507 to 539 (MGITPSGNLAPMENAIRDMADERSSSDSDLGLD) is disordered. Residues 521–532 (AIRDMADERSSS) are compositionally biased toward basic and acidic residues.

It belongs to the synembryn family.

The protein localises to the cytoplasm. It localises to the cell cortex. Its function is as follows. Chaperone that specifically binds and folds nascent G alpha proteins prior to G protein heterotrimer formation, promoting their stability and activity: folds GNAI1, GNAO1, GNA13 and GNAQ. Does not fold G(s) G-alpha proteins GNAS nor GNAL. Also acts as a guanine nucleotide exchange factor (GEF) for G alpha proteins by stimulating exchange of bound GDP for free GTP. The chain is Chaperone Ric-8A (RIC8A) from Gallus gallus (Chicken).